Reading from the N-terminus, the 355-residue chain is Putative testis-specific Y-encoded-like protein 3 (355 aa).

Residues 1–131 (MADKRAGTPE…GEEKQEVAAE (131 aa)) are disordered. Positions 93–128 (ASEKAEDANKEEGAIFKKEPAEEVEKQQEGEEKQEV) are enriched in basic and acidic residues.

It belongs to the nucleosome assembly protein (NAP) family.

This is Putative testis-specific Y-encoded-like protein 3 (TSPY26P) from Homo sapiens (Human).